Reading from the N-terminus, the 188-residue chain is Guanylate kinase (188 aa).

The 180-residue stretch at 4-183 folds into the Guanylate kinase-like domain; the sequence is RNIVVLTAPS…AVEETLTRIR (180 aa). 11–18 provides a ligand contact to ATP; sequence APSGAGKT.

It belongs to the guanylate kinase family.

The protein resides in the cytoplasm. It catalyses the reaction GMP + ATP = GDP + ADP. Functionally, essential for recycling GMP and indirectly, cGMP. This is Guanylate kinase from Salinibacter ruber (strain DSM 13855 / M31).